The chain runs to 304 residues: Porphobilinogen deaminase (304 aa).

Cysteine 240 is modified (S-(dipyrrolylmethanemethyl)cysteine).

Belongs to the HMBS family. As to quaternary structure, monomer. It depends on dipyrromethane as a cofactor.

It catalyses the reaction 4 porphobilinogen + H2O = hydroxymethylbilane + 4 NH4(+). The protein operates within porphyrin-containing compound metabolism; protoporphyrin-IX biosynthesis; coproporphyrinogen-III from 5-aminolevulinate: step 2/4. Tetrapolymerization of the monopyrrole PBG into the hydroxymethylbilane pre-uroporphyrinogen in several discrete steps. This Xanthomonas oryzae pv. oryzae (strain KACC10331 / KXO85) protein is Porphobilinogen deaminase.